Here is a 191-residue protein sequence, read N- to C-terminus: Fe/S biogenesis protein NfuA (191 aa).

2 residues coordinate [4Fe-4S] cluster: Cys149 and Cys152.

It belongs to the NfuA family. In terms of assembly, homodimer. The cofactor is [4Fe-4S] cluster.

Involved in iron-sulfur cluster biogenesis. Binds a 4Fe-4S cluster, can transfer this cluster to apoproteins, and thereby intervenes in the maturation of Fe/S proteins. Could also act as a scaffold/chaperone for damaged Fe/S proteins. This is Fe/S biogenesis protein NfuA from Citrobacter koseri (strain ATCC BAA-895 / CDC 4225-83 / SGSC4696).